The chain runs to 308 residues: Ribosomal RNA small subunit methyltransferase H (308 aa).

Residues 33-35, D51, F82, D96, and Q103 contribute to the S-adenosyl-L-methionine site; that span reads GGY.

The protein belongs to the methyltransferase superfamily. RsmH family.

The protein localises to the cytoplasm. The enzyme catalyses cytidine(1402) in 16S rRNA + S-adenosyl-L-methionine = N(4)-methylcytidine(1402) in 16S rRNA + S-adenosyl-L-homocysteine + H(+). Specifically methylates the N4 position of cytidine in position 1402 (C1402) of 16S rRNA. The protein is Ribosomal RNA small subunit methyltransferase H of Rickettsia canadensis (strain McKiel).